Reading from the N-terminus, the 239-residue chain is MSLIEDCLRSYRFIAIDTEFPSTLRETTQHATDEERYMDMSFSVDRAKLIQLGLTLFDINGRIGGTWEINFSDFGVDDARNEKSIEFLRRNGLDLRKIREEGIRIEGFFSEMFWMLKKTRRNITWVTFHGSYDIAYLLKGFTGEALPVTSERFSKAVARVLGSVYDLKVMAGRCEGLSSRLGLETLAHEFGLNRVGTAHHAGSNNELTAMVFAKVLSPFPLFLRFGSLELRTIESEAIV.

Residues Asp17, Glu19, Asp133, and Asn204 each contribute to the a divalent metal cation site.

This sequence belongs to the CAF1 family. In terms of assembly, component of the CCR4-NOT complex, at least composed of CRR4 and CAF1 proteins. A divalent metal cation serves as cofactor.

It localises to the nucleus. The protein resides in the cytoplasm. It carries out the reaction Exonucleolytic cleavage of poly(A) to 5'-AMP.. Ubiquitous transcription factor required for a diverse set of processes. It is a component of the CCR4 complex involved in the control of gene expression. This is Putative CCR4-associated factor 1 homolog 8 (CAF1-8) from Arabidopsis thaliana (Mouse-ear cress).